The primary structure comprises 524 residues: Nickel-binding periplasmic protein (524 aa).

The signal sequence occupies residues 1–22 (MLSTLRRTLFALLACASFIVHA).

This sequence belongs to the bacterial solute-binding protein 5 family.

It localises to the periplasm. Functionally, involved in a nickel transport system, probably represents the nickel binder. This is Nickel-binding periplasmic protein (nikA) from Escherichia coli (strain K12).